We begin with the raw amino-acid sequence, 389 residues long: Phosphopentomutase (389 aa).

Asp9, Asp282, His287, Asp323, His324, and His335 together coordinate Mn(2+).

This sequence belongs to the phosphopentomutase family. Mn(2+) serves as cofactor.

It localises to the cytoplasm. It carries out the reaction 2-deoxy-alpha-D-ribose 1-phosphate = 2-deoxy-D-ribose 5-phosphate. The enzyme catalyses alpha-D-ribose 1-phosphate = D-ribose 5-phosphate. The protein operates within carbohydrate degradation; 2-deoxy-D-ribose 1-phosphate degradation; D-glyceraldehyde 3-phosphate and acetaldehyde from 2-deoxy-alpha-D-ribose 1-phosphate: step 1/2. Isomerase that catalyzes the conversion of deoxy-ribose 1-phosphate (dRib-1-P) and ribose 1-phosphate (Rib-1-P) to deoxy-ribose 5-phosphate (dRib-5-P) and ribose 5-phosphate (Rib-5-P), respectively. The sequence is that of Phosphopentomutase from Kosmotoga olearia (strain ATCC BAA-1733 / DSM 21960 / TBF 19.5.1).